Here is a 282-residue protein sequence, read N- to C-terminus: uncharacterized protein (282 aa).

5 helical membrane passes run 9–29 (LLKI…APHG), 43–63 (ISGR…FLYA), 123–143 (VFVS…LYLV), 158–178 (YIGM…DNIL), and 232–252 (LAAG…ILLM).

This sequence belongs to the steroid 5-alpha reductase family.

The protein resides in the endoplasmic reticulum membrane. This is an uncharacterized protein from Schizosaccharomyces pombe (strain 972 / ATCC 24843) (Fission yeast).